Reading from the N-terminus, the 208-residue chain is Sodium/potassium-transporting ATPase subunit beta-1-interacting protein 4 (208 aa).

3 helical membrane passes run 35 to 55, 62 to 82, and 151 to 171; these read APILANFVHIIIVILGLFGTI, VMVYTLWAAVWVTWNVFIICF, and CLQILIALLGFVCGCQVVSVF.

It belongs to the NKAIN family. As to quaternary structure, interacts with ATP1B1.

Its subcellular location is the cell membrane. In Homo sapiens (Human), this protein is Sodium/potassium-transporting ATPase subunit beta-1-interacting protein 4 (NKAIN4).